The primary structure comprises 865 residues: MKDFYARVTVMVTGLCFVGTVTNPSRKSSLSLHQQDGDLLANWSSTRHTSQKTDTVDRNSYFFRVLFQPHTKERHTNHLDRTNHRLSKVTLSCLAHLRALEMLNLGDDVIHSLCLDLSLPSSSRQKRHRSRFRGRHPRLKVLLLQRNQLGPTPKGLWKLKPLCSLDLSFNRRVGIGLSGFHGCLQLKSIYLKNNKILTIHPEAFKGLKKLQVVDLRSSALTMLVPIVTIALEWPNLELGLADNQWQCNESDANFQNIASVSWGEIWKAVCNTPVENEKPYVEASQIRISRDIHLPRSPSSDLQSLIQSKAEKPRAGMDVHLSALEKKAQVGYGDLKGIWLQSPMELRDSQGGPVTDRKDDKPPDLALAVCLSVFITFVVAFCLGAFARPYIDRLRQQRCLNKRPGSENAYSNEGFHDDVEAAQHVQHQGTDLCQTTHHLNLFENQDPSWGTEAIPHGAVLSERMLGSNGMDPSSQQSPGQFEDSGEARSGDGNMFPNGRVVHPAVHGLPSADAQKPISPGQHHYDVPEESLYDTVAQEYSLLDNAMDRSSVAGCLGTFPNSINSGRDELCPSQPRDVVASFSKTLAHMSTREAEESVERGFPEPLGAMGSQIESSEERQVSNSIRELATQQASFQEVDVEERLAHVYSEALYNDTPSHMPRHSSGHDVASATEEAVQRDASFDPHDDLVTNYESDSDEGSLFTLSSEGSQDTRSLTEEQAFVESGGDSQPLPSRNLGEYKDSVTSAESVEDITSQQTLEKREAQEAHLGNTLISGPDSCVHETHLENDSSPLDPENVPTWTQPPDHKLAHHETLGTFVYGDIGPQSEAVDWLYSLRDLEFPNIDSSPSPPCSDQDPSDPEEHDTK.

A helical transmembrane segment spans residues F4–P24. Residue N42 is glycosylated (N-linked (GlcNAc...) asparagine). LRR repeat units follow at residues R138–K160, P161–G182, Q185–G206, K209–A230, and N235–Q255. N-linked (GlcNAc...) asparagine glycosylation occurs at N248. A helical transmembrane segment spans residues A366–F386. 2 disordered regions span residues R463 to H522 and D654 to V749. Residues M470–G479 are compositionally biased toward polar residues. Over residues A675–L688 the composition is skewed to basic and acidic residues. Positions F702–R713 are enriched in polar residues. A phosphoserine mark is found at S714 and S748. Residues S728–E759 form the LRRNT domain. N787 is a glycosylation site (N-linked (GlcNAc...) asparagine). The tract at residues F840–K865 is disordered. Residues D855–K865 are compositionally biased toward acidic residues.

It is found in the membrane. This is Leucine-rich repeat-containing protein 66 (Lrrc66) from Rattus norvegicus (Rat).